Consider the following 155-residue polypeptide: uncharacterized protein (155 aa).

This is an uncharacterized protein from Autographa californica nuclear polyhedrosis virus (AcMNPV).